A 185-amino-acid chain; its full sequence is MIDETLLEAEEKMERAIEHAKEEFGAIRTGRANAAMFSKIIIDYYGSPTPLPQMASIGVPEPRMVIIKPYDNSQTNAMEKAIRDSDLGVNPNNEGNQLRILLPQMTEERRREMIKVARHKGEEAKVAVRNIRRKAKEELDRLVKAGEVGEDEGRRAEKELDDLTQRFVGVVDELIKHKEAELLEV.

It belongs to the RRF family.

It localises to the cytoplasm. Responsible for the release of ribosomes from messenger RNA at the termination of protein biosynthesis. May increase the efficiency of translation by recycling ribosomes from one round of translation to another. In Salinispora arenicola (strain CNS-205), this protein is Ribosome-recycling factor.